Here is a 482-residue protein sequence, read N- to C-terminus: Aspartyl/glutamyl-tRNA(Asn/Gln) amidotransferase subunit B (482 aa).

This sequence belongs to the GatB/GatE family. GatB subfamily. As to quaternary structure, heterotrimer of A, B and C subunits.

The enzyme catalyses L-glutamyl-tRNA(Gln) + L-glutamine + ATP + H2O = L-glutaminyl-tRNA(Gln) + L-glutamate + ADP + phosphate + H(+). It catalyses the reaction L-aspartyl-tRNA(Asn) + L-glutamine + ATP + H2O = L-asparaginyl-tRNA(Asn) + L-glutamate + ADP + phosphate + 2 H(+). In terms of biological role, allows the formation of correctly charged Asn-tRNA(Asn) or Gln-tRNA(Gln) through the transamidation of misacylated Asp-tRNA(Asn) or Glu-tRNA(Gln) in organisms which lack either or both of asparaginyl-tRNA or glutaminyl-tRNA synthetases. The reaction takes place in the presence of glutamine and ATP through an activated phospho-Asp-tRNA(Asn) or phospho-Glu-tRNA(Gln). The chain is Aspartyl/glutamyl-tRNA(Asn/Gln) amidotransferase subunit B from Azotobacter vinelandii (strain DJ / ATCC BAA-1303).